The sequence spans 610 residues: UvrABC system protein C (610 aa).

The 79-residue stretch at 16-94 (SQPGVYRMYD…IKLYQPRYNV (79 aa)) folds into the GIY-YIG domain. Residues 204 to 239 (DQVLNQLVARMEQASGDLRFEEAGRLRDQIQAVRRV) form the UVR domain.

The protein belongs to the UvrC family. In terms of assembly, interacts with UvrB in an incision complex.

The protein resides in the cytoplasm. Its function is as follows. The UvrABC repair system catalyzes the recognition and processing of DNA lesions. UvrC both incises the 5' and 3' sides of the lesion. The N-terminal half is responsible for the 3' incision and the C-terminal half is responsible for the 5' incision. This Erwinia tasmaniensis (strain DSM 17950 / CFBP 7177 / CIP 109463 / NCPPB 4357 / Et1/99) protein is UvrABC system protein C.